We begin with the raw amino-acid sequence, 153 residues long: Prefoldin subunit alpha (153 aa).

It belongs to the prefoldin subunit alpha family. In terms of assembly, heterohexamer of two alpha and four beta subunits.

The protein resides in the cytoplasm. Functionally, molecular chaperone capable of stabilizing a range of proteins. Seems to fulfill an ATP-independent, HSP70-like function in archaeal de novo protein folding. This chain is Prefoldin subunit alpha, found in Methanothrix thermoacetophila (strain DSM 6194 / JCM 14653 / NBRC 101360 / PT) (Methanosaeta thermophila).